Here is a 269-residue protein sequence, read N- to C-terminus: Hydroxyacylglutathione hydrolase (269 aa).

The Zn(2+) site is built by histidine 56, histidine 58, aspartate 60, histidine 61, histidine 115, aspartate 137, and histidine 177.

Belongs to the metallo-beta-lactamase superfamily. Glyoxalase II family. In terms of assembly, monomer. It depends on Zn(2+) as a cofactor.

The enzyme catalyses an S-(2-hydroxyacyl)glutathione + H2O = a 2-hydroxy carboxylate + glutathione + H(+). It functions in the pathway secondary metabolite metabolism; methylglyoxal degradation; (R)-lactate from methylglyoxal: step 2/2. Its function is as follows. Thiolesterase that catalyzes the hydrolysis of S-D-lactoyl-glutathione to form glutathione and D-lactic acid. The sequence is that of Hydroxyacylglutathione hydrolase from Leptospira borgpetersenii serovar Hardjo-bovis (strain JB197).